The following is a 452-amino-acid chain: Maltoporin (452 aa).

The first 25 residues, 1–25, serve as a signal peptide directing secretion; it reads MMITLRKLPLAVAVAAGVMSAQAMA.

The protein belongs to the porin LamB (TC 1.B.3) family. In terms of assembly, homotrimer formed of three 18-stranded antiparallel beta-barrels, containing three independent channels.

It is found in the cell outer membrane. It catalyses the reaction beta-maltose(in) = beta-maltose(out). Its function is as follows. Involved in the transport of maltose and maltodextrins. This chain is Maltoporin, found in Salmonella heidelberg (strain SL476).